Consider the following 53-residue polypeptide: Ovomucoid (53 aa).

A Kazal-like domain is found at 3–53 (VDCSEYPQPTCTTEHRPVCGSNNETYGNKCNFCNAVVKSNGTLTVSHFGKC). Disulfide bonds link Cys-5–Cys-35, Cys-13–Cys-32, and Cys-21–Cys-53. A glycan (N-linked (GlcNAc...) asparagine) is linked at Asn-42.

The protein localises to the secreted. The protein is Ovomucoid of Polyplectron bicalcaratum (Grey peacock-pheasant).